A 94-amino-acid polypeptide reads, in one-letter code: Long neurotoxin LNTX1 (94 aa).

The signal sequence occupies residues 1-21; the sequence is MKILLLTLVVVTIMCLDLGYT. 5 cysteine pairs are disulfide-bonded: Cys24–Cys43, Cys36–Cys64, Cys49–Cys53, Cys68–Cys79, and Cys80–Cys85.

Belongs to the three-finger toxin family. Long-chain subfamily. Type II alpha-neurotoxin sub-subfamily. In terms of assembly, monomer. Expressed by the venom gland.

The protein localises to the secreted. In terms of biological role, binds with high affinity to muscular (alpha-1/CHRNA1) and neuronal (alpha-7/CHRNA7) nicotinic acetylcholine receptor (nAChR) and inhibits acetylcholine from binding to the receptor, thereby impairing neuromuscular and neuronal transmission. Recombinant LNTX1 leads to a functional block of the muscle-type acetylcholine receptors. Has a cytotoxic activity. This chain is Long neurotoxin LNTX1, found in Ophiophagus hannah (King cobra).